The sequence spans 235 residues: Small ribosomal subunit protein uS2c (235 aa).

This sequence belongs to the universal ribosomal protein uS2 family.

The protein localises to the plastid. Its subcellular location is the chloroplast. This is Small ribosomal subunit protein uS2c (rps2) from Huperzia lucidula (Shining clubmoss).